Here is a 209-residue protein sequence, read N- to C-terminus: Small ribosomal subunit protein uS4 (209 aa).

The region spanning 98–166 (RRLDNVVYRL…IKQAIELNKG (69 aa)) is the S4 RNA-binding domain.

It belongs to the universal ribosomal protein uS4 family. Part of the 30S ribosomal subunit. Contacts protein S5. The interaction surface between S4 and S5 is involved in control of translational fidelity.

One of the primary rRNA binding proteins, it binds directly to 16S rRNA where it nucleates assembly of the body of the 30S subunit. In terms of biological role, with S5 and S12 plays an important role in translational accuracy. In Fervidobacterium nodosum (strain ATCC 35602 / DSM 5306 / Rt17-B1), this protein is Small ribosomal subunit protein uS4.